We begin with the raw amino-acid sequence, 424 residues long: Putative chloroquine resistance transporter (424 aa).

The Cytoplasmic segment spans residues 1–56; sequence MTVIKKGKNKKKNLKNDDRYKELDSLITNGSEIGDNSGRSCIKRFFKIIGNEMKNN. Residues 57–77 form a helical membrane-spanning segment; it reads VYVYFLSILYLCVCVMNKVFA. The Vacuolar segment spans residues 78–88; the sequence is KRTLNKMGNYS. The N-linked (GlcNAc...) asparagine glycan is linked to Asn-86. The chain crosses the membrane as a helical span at residues 89 to 109; that stretch reads FVTSETHNIICIVVFQLLYFI. The Cytoplasmic portion of the chain corresponds to 110 to 125; it reads YRKTSTSGYKNESQKN. A helical transmembrane segment spans residues 126–146; it reads FGWQFFLISLLDASTVIISMI. Residues 147-156 lie on the Vacuolar side of the membrane; the sequence is GLTRTTGNIQ. The chain crosses the membrane as a helical span at residues 157-177; the sequence is SFIMQLIIPVNMYFCFMFLGY. Residues 178 to 180 are Cytoplasmic-facing; sequence RYH. A helical transmembrane segment spans residues 181 to 201; the sequence is LFNYLGAFIILITIAVVETFL. Residues 202–209 lie on the Vacuolar side of the membrane; the sequence is SFETQSEN. A helical transmembrane segment spans residues 210 to 230; sequence SIIFNLIMISALIPLSFSNMT. The Cytoplasmic portion of the chain corresponds to 231–248; that stretch reads REVVFKKHKINILRLNAM. A helical membrane pass occupies residues 249–269; it reads VVLFQFFTSLLVLPVYNIPFL. Residues 270-317 are Vacuolar-facing; it reads KEIYMPFSEMSTNINNGLRCLFYGQNTVVENCGVGMVKMCDNCEGAWK. Cystine bridges form between Cys-289-Cys-312 and Cys-301-Cys-309. Residues 318–338 traverse the membrane as a helical segment; it reads TFITFSFFNICDNLLACYIID. Over 339 to 346 the chain is Cytoplasmic; the sequence is KFSTMTYT. The helical transmembrane segment at 347 to 367 threads the bilayer; that stretch reads IVSCIQGPAITIAYYFKFLAG. Over 368–377 the chain is Vacuolar; sequence DAVRKPRILD. Residues 378 to 398 form a helical membrane-spanning segment; the sequence is FLTLFGYLFGTIIYRIGNIIL. The Cytoplasmic portion of the chain corresponds to 399–424; sequence EKKKMVKSQNSNDSEAELTCIETSTA.

It belongs to the CRT-like transporter family.

The protein resides in the vacuole membrane. Its function is as follows. Nutrient transporter. Involved in maintaining the osmotic homeostasis of the digestive vacuole. This Plasmodium yoelii yoelii protein is Putative chloroquine resistance transporter.